The sequence spans 263 residues: MAARTKNGLTASASGMQSLLPHTLPHADPAGPRDSLYPAFFTGIDEAGRGCLAGPVVAAAVILPPAGAPAAPHIAAALSGLTDSKKLSEKRRLTLEPAIKSCAVRWGVGVVWPQVIDRINILQATYRAMSLAVRHLRGGGAAASMPAGLPPVFLAVDGDKTIPGQVLQAVTGLSVPQEAIVGGDGCVMAISAASVLAKTFRDRLMTALDKRYSGYGFATHKGYGTAAHIEAIRRLGPCRMHRLSFAKVKPAAAPHAADQNTLW.

An RNase H type-2 domain is found at 39–257; that stretch reads AFFTGIDEAG…VKPAAAPHAA (219 aa). A divalent metal cation is bound by residues Asp45, Glu46, and Asp157.

This sequence belongs to the RNase HII family. Requires Mn(2+) as cofactor. Mg(2+) is required as a cofactor.

The protein resides in the cytoplasm. The enzyme catalyses Endonucleolytic cleavage to 5'-phosphomonoester.. In terms of biological role, endonuclease that specifically degrades the RNA of RNA-DNA hybrids. This Oleidesulfovibrio alaskensis (strain ATCC BAA-1058 / DSM 17464 / G20) (Desulfovibrio alaskensis) protein is Ribonuclease HII.